We begin with the raw amino-acid sequence, 141 residues long: Photosystem I reaction center subunit IV A, chloroplastic (141 aa).

A chloroplast-targeting transit peptide spans 1–49 (MASCNMASAASNFLVATPNVASNTNTSRTTMLFFSSKNYGSTAPRLVVR). Low complexity predominate over residues 57-73 (PAAAATAEPAEAPVKAA). The interval 57 to 83 (PAAAATAEPAEAPVKAAKPPPIGPKRG) is disordered.

Belongs to the PsaE family. Post-translationally, 2 isoforms exists (ratio 1:1). With or without the N-terminal alanine.

It is found in the plastid. The protein localises to the chloroplast thylakoid membrane. Its function is as follows. Stabilizes the interaction between PsaC and the PSI core, assists the docking of the ferredoxin to PSI and interacts with ferredoxin-NADP oxidoreductase. In Nicotiana sylvestris (Wood tobacco), this protein is Photosystem I reaction center subunit IV A, chloroplastic (PSAEA).